The following is a 1028-amino-acid chain: Carbamoyl phosphate synthase large chain (1028 aa).

Residues 1–409 (MPPRRDLKKI…ALMKALRGLE (409 aa)) are carboxyphosphate synthetic domain. Residues Arg129, Arg169, Gly175, Gly176, Glu208, Val210, Glu215, Gly241, Val242, His243, Gln285, and Glu299 each contribute to the ATP site. An ATP-grasp 1 domain is found at 133–328 (QEAMQRIGLE…IAKIAALLAV (196 aa)). Mg(2+) is bound by residues Gln285, Glu299, and Asn301. Mn(2+)-binding residues include Gln285, Glu299, and Asn301. The segment at 410–549 (RDVRALAGVR…YSTYELEDEV (140 aa)) is oligomerization domain. Positions 550-933 (WPSQKPKVVI…AYYKAELGAG (384 aa)) are carbamoyl phosphate synthetic domain. Positions 674–866 (HALCQRLGIP…LAKLAALIAV (193 aa)) constitute an ATP-grasp 2 domain. ATP contacts are provided by Arg710, Arg750, Leu752, Glu757, Gly782, Val783, His784, Ser785, Gln825, and Glu837. Mg(2+)-binding residues include Gln825, Glu837, and Asn839. Mn(2+)-binding residues include Gln825, Glu837, and Asn839. Residues 934-1028 (QRLPLSGRVR…QDWHQKAPRG (95 aa)) enclose the MGS-like domain. Residues 934-1028 (QRLPLSGRVR…QDWHQKAPRG (95 aa)) are allosteric domain.

Belongs to the CarB family. As to quaternary structure, composed of two chains; the small (or glutamine) chain promotes the hydrolysis of glutamine to ammonia, which is used by the large (or ammonia) chain to synthesize carbamoyl phosphate. Tetramer of heterodimers (alpha,beta)4. Mg(2+) is required as a cofactor. Requires Mn(2+) as cofactor.

The enzyme catalyses hydrogencarbonate + L-glutamine + 2 ATP + H2O = carbamoyl phosphate + L-glutamate + 2 ADP + phosphate + 2 H(+). It carries out the reaction hydrogencarbonate + NH4(+) + 2 ATP = carbamoyl phosphate + 2 ADP + phosphate + 2 H(+). It participates in amino-acid biosynthesis; L-arginine biosynthesis; carbamoyl phosphate from bicarbonate: step 1/1. Its pathway is pyrimidine metabolism; UMP biosynthesis via de novo pathway; (S)-dihydroorotate from bicarbonate: step 1/3. Functionally, large subunit of the glutamine-dependent carbamoyl phosphate synthetase (CPSase). CPSase catalyzes the formation of carbamoyl phosphate from the ammonia moiety of glutamine, carbonate, and phosphate donated by ATP, constituting the first step of 2 biosynthetic pathways, one leading to arginine and/or urea and the other to pyrimidine nucleotides. The large subunit (synthetase) binds the substrates ammonia (free or transferred from glutamine from the small subunit), hydrogencarbonate and ATP and carries out an ATP-coupled ligase reaction, activating hydrogencarbonate by forming carboxy phosphate which reacts with ammonia to form carbamoyl phosphate. The chain is Carbamoyl phosphate synthase large chain from Thermus thermophilus (strain ATCC 27634 / DSM 579 / HB8).